Consider the following 272-residue polypeptide: Rhamnulose-1-phosphate aldolase (272 aa).

Glutamate 117 is a catalytic residue. Zn(2+) contacts are provided by histidine 141, histidine 143, and histidine 212.

The protein belongs to the aldolase class II family. RhaD subfamily. Zn(2+) serves as cofactor.

It is found in the cytoplasm. The catalysed reaction is L-rhamnulose 1-phosphate = (S)-lactaldehyde + dihydroxyacetone phosphate. Its pathway is carbohydrate degradation; L-rhamnose degradation; glycerone phosphate from L-rhamnose: step 3/3. In terms of biological role, catalyzes the reversible cleavage of L-rhamnulose-1-phosphate to dihydroxyacetone phosphate (DHAP) and L-lactaldehyde. This is Rhamnulose-1-phosphate aldolase from Mannheimia succiniciproducens (strain KCTC 0769BP / MBEL55E).